The chain runs to 308 residues: Cytochrome b (308 aa).

The next 4 helical transmembrane spans lie at 1–21 (FGSL…LLAT), 45–66 (WLIR…YLHI), 81–101 (WNTG…GYVL), and 146–166 (FFAL…IHFT). His65 is a binding site for heme b. Residues His150 and His164 each contribute to the heme b site. Residue His169 coordinates a ubiquinone. The next 3 membrane-spanning stretches (helical) occupy residues 194 to 214 (VKDI…ALFS), 256 to 276 (LGGV…PFLH), and 288 to 308 (LSQF…WVGS).

Belongs to the cytochrome b family. In terms of assembly, the cytochrome bc1 complex contains 11 subunits: 3 respiratory subunits (MT-CYB, CYC1 and UQCRFS1), 2 core proteins (UQCRC1 and UQCRC2) and 6 low-molecular weight proteins (UQCRH/QCR6, UQCRB/QCR7, UQCRQ/QCR8, UQCR10/QCR9, UQCR11/QCR10 and a cleavage product of UQCRFS1). This cytochrome bc1 complex then forms a dimer. The cofactor is heme b.

The protein localises to the mitochondrion inner membrane. Its function is as follows. Component of the ubiquinol-cytochrome c reductase complex (complex III or cytochrome b-c1 complex) that is part of the mitochondrial respiratory chain. The b-c1 complex mediates electron transfer from ubiquinol to cytochrome c. Contributes to the generation of a proton gradient across the mitochondrial membrane that is then used for ATP synthesis. The chain is Cytochrome b (MT-CYB) from Colaptes rupicola (Southern Andean flicker).